A 130-amino-acid chain; its full sequence is Histone H2A type 1 (130 aa).

The disordered stretch occupies residues 1–22 (MSGRGKQGGKTRAKAKTRSSRA). Ser-2 bears the N-acetylserine mark. Ser-2 carries the phosphoserine modification. Lys-6 carries the post-translational modification N6-(2-hydroxyisobutyryl)lysine. Position 6 is an N6-acetyllysine (Lys-6). Over residues 7-19 (QGGKTRAKAKTRS) the composition is skewed to basic residues. At Lys-10 the chain carries N6-(2-hydroxyisobutyryl)lysine; alternate. Lys-10 carries the N6-lactoyllysine; alternate modification. Position 10 is an N6-succinyllysine (Lys-10). Residues Lys-14 and Lys-16 each participate in a glycyl lysine isopeptide (Lys-Gly) (interchain with G-Cter in ubiquitin) cross-link. An N6-(2-hydroxyisobutyryl)lysine; alternate modification is found at Lys-37. N6-(2-hydroxyisobutyryl)lysine occurs at positions 75 and 76. Lys-96 carries the post-translational modification N6-(2-hydroxyisobutyryl)lysine; alternate. Lys-96 bears the N6-succinyllysine mark. Lys-96 bears the N6-glutaryllysine; alternate mark. Gln-105 is modified (N5-methylglutamine). Position 119 is an N6-(2-hydroxyisobutyryl)lysine; alternate (Lys-119). N6-glutaryllysine; alternate is present on Lys-119. Lys-120 is covalently cross-linked (Glycyl lysine isopeptide (Lys-Gly) (interchain with G-Cter in ubiquitin)).

This sequence belongs to the histone H2A family. As to quaternary structure, the nucleosome is a histone octamer containing two molecules each of H2A, H2B, H3 and H4 assembled in one H3-H4 heterotetramer and two H2A-H2B heterodimers. The octamer wraps approximately 147 bp of DNA. Post-translationally, monoubiquitination of Lys-120 (H2AK119Ub) gives a specific tag for epigenetic transcriptional repression. Following DNA double-strand breaks (DSBs), it is ubiquitinated through 'Lys-63' linkage of ubiquitin moieties, leading to the recruitment of repair proteins to sites of DNA damage. H2AK119Ub and ionizing radiation-induced 'Lys-63'-linked ubiquitination are distinct events. Phosphorylation on Ser-2 is enhanced during mitosis. Phosphorylation on Ser-2 directly represses transcription. In terms of processing, glutamine methylation at Gln-105 (H2AQ104me) by FBL is specifically dedicated to polymerase I. It is present at 35S ribosomal DNA locus and impairs binding of the FACT complex.

The protein resides in the nucleus. It is found in the chromosome. Functionally, core component of nucleosome. Nucleosomes wrap and compact DNA into chromatin, limiting DNA accessibility to the cellular machineries which require DNA as a template. Histones thereby play a central role in transcription regulation, DNA repair, DNA replication and chromosomal stability. DNA accessibility is regulated via a complex set of post-translational modifications of histones, also called histone code, and nucleosome remodeling. In Xenopus laevis (African clawed frog), this protein is Histone H2A type 1.